The chain runs to 322 residues: Mas-related G-protein coupled receptor member X1 (322 aa).

Over M1 to S30 the chain is Extracellular. Residue N16 is glycosylated (N-linked (GlcNAc...) asparagine). A helical transmembrane segment spans residues F31–L51. Topologically, residues G52–A59 are cytoplasmic. The chain crosses the membrane as a helical span at residues I60–I80. Residues D81–D100 are Extracellular-facing. The helical transmembrane segment at I101 to S121 threads the bilayer. The Cytoplasmic segment spans residues T122–M142. The helical transmembrane segment at S143–F163 threads the bilayer. Residues S164–D179 are Extracellular-facing. A helical membrane pass occupies residues F180–L200. At L201–T223 the chain is on the cytoplasmic side. A helical membrane pass occupies residues V224–F244. Residues G245–Q257 are Extracellular-facing. Residues V258 to G278 form a helical membrane-spanning segment. The Cytoplasmic portion of the chain corresponds to S279 to Y322.

The protein belongs to the G-protein coupled receptor 1 family. Mas subfamily. Expressed in a subset of IB4-positive small diameter nociceptive dorsal root neurons.

Its subcellular location is the cell membrane. Functionally, orphan receptor activated by neuropeptides terminating in Arg-Phe or Arg-Phe-amide. Mediates its action by association with G proteins that activate a phosphatidylinositol-calcium second messenger system. Its effect is mediated by G(q) and G(11) proteins. May regulate the function of nociceptive neurons by modulation of pain perception. This is Mas-related G-protein coupled receptor member X1 from Mus musculus (Mouse).